The sequence spans 2235 residues: Bridge-like lipid transfer protein family member 2 (2235 aa).

Positions 1 to 31 (MPLFFSALLVLLLVALSALFLGRWLVVRLAT) are cleaved as a signal peptide. The transmembrane domain stretch occupies residues 29–108 (LATKWCQRKL…LQKVSDLSAP (80 aa)). Residue Ser-563 is modified to Phosphoserine. An N-linked (GlcNAc...) asparagine glycan is attached at Asn-730. Residues 1495 to 1529 (PQMPAKKPKRGVPTSASAPPRVNTPSFSGQPDKGS) form a disordered region. A coiled-coil region spans residues 1813–1885 (SILHLQEAVR…LNILIRCFKD (73 aa)). 3 positions are modified to phosphoserine: Ser-1846, Ser-2090, and Ser-2094. The segment at 2074 to 2099 (GKGVAQGLTRSSGVRRSFRKSPEHPV) is disordered.

This sequence belongs to the SABRE family. Expressed in pancreas, placenta and up-regulated in breast carcinoma epithelial cells, ductal in situ carcinoma (DCIS), invasive breast carcinoma (IBC) and metastatic breast carcinoma cells (MET).

It is found in the cell membrane. Its subcellular location is the endoplasmic reticulum membrane. The protein localises to the mitochondrion membrane. Functionally, tube-forming lipid transport protein which binds to phosphatidylinositols and affects phosphatidylinositol-4,5-bisphosphate (PtdIns-4,5-P2) distribution. In Homo sapiens (Human), this protein is Bridge-like lipid transfer protein family member 2.